An 827-amino-acid chain; its full sequence is Probable beta-glucosidase H (827 aa).

D223 is an active-site residue. A PA14 domain is found at 387 to 546 (RLLTNAVMHF…DSAEMVRSAV (160 aa)). N-linked (GlcNAc...) asparagine glycans are attached at residues N471, N594, N600, and N625.

It belongs to the glycosyl hydrolase 3 family.

It is found in the secreted. The enzyme catalyses Hydrolysis of terminal, non-reducing beta-D-glucosyl residues with release of beta-D-glucose.. Its pathway is glycan metabolism; cellulose degradation. Functionally, beta-glucosidases are one of a number of cellulolytic enzymes involved in the degradation of cellulosic biomass. Catalyzes the last step releasing glucose from the inhibitory cellobiose. This Aspergillus oryzae (strain ATCC 42149 / RIB 40) (Yellow koji mold) protein is Probable beta-glucosidase H (bglH).